The sequence spans 298 residues: Small ribosomal subunit biogenesis GTPase RsgA 1 (298 aa).

Positions 63–224 (QTQLVRPPVA…VADTPGFSSY (162 aa)) constitute a CP-type G domain. GTP-binding positions include 112 to 115 (AKTD) and 167 to 175 (GQTGAGKST). Zn(2+)-binding residues include Cys-248, Cys-253, His-255, and Cys-261.

This sequence belongs to the TRAFAC class YlqF/YawG GTPase family. RsgA subfamily. As to quaternary structure, monomer. Associates with 30S ribosomal subunit, binds 16S rRNA. Zn(2+) serves as cofactor.

It is found in the cytoplasm. In terms of biological role, one of several proteins that assist in the late maturation steps of the functional core of the 30S ribosomal subunit. Helps release RbfA from mature subunits. May play a role in the assembly of ribosomal proteins into the subunit. Circularly permuted GTPase that catalyzes slow GTP hydrolysis, GTPase activity is stimulated by the 30S ribosomal subunit. The chain is Small ribosomal subunit biogenesis GTPase RsgA 1 from Lactiplantibacillus plantarum (strain ATCC BAA-793 / NCIMB 8826 / WCFS1) (Lactobacillus plantarum).